A 129-amino-acid polypeptide reads, in one-letter code: Cytochrome c oxidase subunit 5B, mitochondrial (129 aa).

Residues 1–31 (MASRLLRGAGTLAAQALRARGPSGAAAMRSM) constitute a mitochondrion transit peptide. An N6-acetyllysine mark is found at lysine 68 and lysine 86. Residues cysteine 91, cysteine 93, cysteine 113, and cysteine 116 each contribute to the Zn(2+) site. Lysine 121 bears the N6-acetyllysine mark.

The protein belongs to the cytochrome c oxidase subunit 5B family. As to quaternary structure, component of the cytochrome c oxidase (complex IV, CIV), a multisubunit enzyme composed of 14 subunits. The complex is composed of a catalytic core of 3 subunits MT-CO1, MT-CO2 and MT-CO3, encoded in the mitochondrial DNA, and 11 supernumerary subunits COX4I1 (or COX4I2), COX5A, COX5B, COX6A1 (or COX6A2), COX6B1 (or COX6B2), COX6C, COX7A2 (or COX7A1), COX7B, COX7C, COX8A and NDUFA4, which are encoded in the nuclear genome. The complex exists as a monomer or a dimer and forms supercomplexes (SCs) in the inner mitochondrial membrane with NADH-ubiquinone oxidoreductase (complex I, CI) and ubiquinol-cytochrome c oxidoreductase (cytochrome b-c1 complex, complex III, CIII), resulting in different assemblies (supercomplex SCI(1)III(2)IV(1) and megacomplex MCI(2)III(2)IV(2)).

The protein localises to the mitochondrion inner membrane. The protein operates within energy metabolism; oxidative phosphorylation. Its function is as follows. Component of the cytochrome c oxidase, the last enzyme in the mitochondrial electron transport chain which drives oxidative phosphorylation. The respiratory chain contains 3 multisubunit complexes succinate dehydrogenase (complex II, CII), ubiquinol-cytochrome c oxidoreductase (cytochrome b-c1 complex, complex III, CIII) and cytochrome c oxidase (complex IV, CIV), that cooperate to transfer electrons derived from NADH and succinate to molecular oxygen, creating an electrochemical gradient over the inner membrane that drives transmembrane transport and the ATP synthase. Cytochrome c oxidase is the component of the respiratory chain that catalyzes the reduction of oxygen to water. Electrons originating from reduced cytochrome c in the intermembrane space (IMS) are transferred via the dinuclear copper A center (CU(A)) of subunit 2 and heme A of subunit 1 to the active site in subunit 1, a binuclear center (BNC) formed by heme A3 and copper B (CU(B)). The BNC reduces molecular oxygen to 2 water molecules using 4 electrons from cytochrome c in the IMS and 4 protons from the mitochondrial matrix. In Homo sapiens (Human), this protein is Cytochrome c oxidase subunit 5B, mitochondrial (COX5B).